Reading from the N-terminus, the 282-residue chain is Pantothenate synthetase (282 aa).

ATP is bound at residue 30-37 (MGYLHEGH). H37 (proton donor) is an active-site residue. Residue Q61 coordinates (R)-pantoate. Q61 contributes to the beta-alanine binding site. Residue 147 to 150 (GMKD) participates in ATP binding. (R)-pantoate is bound at residue Q153. ATP is bound by residues V176 and 184-187 (KSSR).

The protein belongs to the pantothenate synthetase family. In terms of assembly, homodimer.

It localises to the cytoplasm. It catalyses the reaction (R)-pantoate + beta-alanine + ATP = (R)-pantothenate + AMP + diphosphate + H(+). The protein operates within cofactor biosynthesis; (R)-pantothenate biosynthesis; (R)-pantothenate from (R)-pantoate and beta-alanine: step 1/1. Its function is as follows. Catalyzes the condensation of pantoate with beta-alanine in an ATP-dependent reaction via a pantoyl-adenylate intermediate. This is Pantothenate synthetase from Bacillus cereus (strain ZK / E33L).